The primary structure comprises 392 residues: Selenide, water dikinase 1 (392 aa).

Residue cysteine 31 is part of the active site. ATP is bound by residues lysine 32, 67–69 (GMD), aspartate 87, aspartate 110, and 161–164 (GGQT). Aspartate 69 is a Mg(2+) binding site. Residue aspartate 110 coordinates Mg(2+). Aspartate 265 serves as a coordination point for Mg(2+).

Belongs to the selenophosphate synthase 1 family. Class II subfamily. Homodimer. Mg(2+) serves as cofactor.

It is found in the cell membrane. Its subcellular location is the nucleus membrane. It carries out the reaction hydrogenselenide + ATP + H2O = selenophosphate + AMP + phosphate + 2 H(+). Functionally, synthesizes selenophosphate from selenide and ATP. The sequence is that of Selenide, water dikinase 1 (sephs1) from Xenopus laevis (African clawed frog).